Consider the following 75-residue polypeptide: Small capsomere-interacting protein (75 aa).

The protein belongs to the herpesviridae small capsomere-interacting protein family. In terms of assembly, interacts with the major capsid protein/MCP.

It is found in the virion. The protein resides in the host nucleus. Participates in the assembly of the infectious particles by decorating the outer surface of the capsid shell and thus forming a layer between the capsid and the tegument. Complexes composed of the major capsid protein and small capsomere-interacting protein/SCP assemble together in the host cytoplasm and are translocated to the nucleus, where they accumulate and participate in capsid assembly. In Homo sapiens (Human), this protein is Small capsomere-interacting protein.